We begin with the raw amino-acid sequence, 264 residues long: MENIEKKCQPETINEDNNDEKQYEPEIIEFTVNGFNYVVKFSKTCVPSIHITCTHVEEFYSWSFTTDKNIDNQIPTNTIENVAKQDIKIHPKMLFDMFCSFKNNSLEKMFELVFPKDFKTHETNLNIYIFTTIAYSKYVDHKYISLAQVEISEYDRFLLKSSKANKLFMEQTKKELNDMREINETLKNEINNTKNIFNESIKNLVENFECEYAKDKTIESIKTEEENFEDFEKLMKKFLANPKCMKYIIDAISNSNVFATKDEL.

Residues Met-1 to Glu-20 are disordered.

It belongs to the mimivirus R73/L269/L862 family.

This is an uncharacterized protein from Acanthamoeba polyphaga mimivirus (APMV).